Reading from the N-terminus, the 710-residue chain is Ribonuclease R (710 aa).

Residues 246 to 573 (RKDLRDKVIV…VHRLLKLYLE (328 aa)) form the RNB domain. The 81-residue stretch at 625 to 705 (GEVFNVVVTN…IRGEIDFVLV (81 aa)) folds into the S1 motif domain.

The protein belongs to the RNR ribonuclease family. RNase R subfamily.

It localises to the cytoplasm. It catalyses the reaction Exonucleolytic cleavage in the 3'- to 5'-direction to yield nucleoside 5'-phosphates.. In terms of biological role, 3'-5' exoribonuclease that releases 5'-nucleoside monophosphates and is involved in maturation of structured RNAs. The polypeptide is Ribonuclease R (Thermotoga maritima (strain ATCC 43589 / DSM 3109 / JCM 10099 / NBRC 100826 / MSB8)).